A 552-amino-acid chain; its full sequence is MVSVQKVPAIALCSGVSLALLHFLCLAACLNESPGQNSKDEKLCPENFTRILDSLLDGYDNRLRPGFGGPVTEVKTDIYVTSFGPVSDVEMEYTMDVFFRQTWIDKRLKYDGPIEILRLNNMMVTKVWTPDTFFRNGKKSVSHNMTAPNKLFRIMRNGTILYTMRLTISAECPMRLVDFPMDGHACPLKFGSYAYPKSEMIYTWTKGPEKSVEVPKESSSLVQYDLIGQTVSSETIKSITGEYIVMTVYFHLRRKMGYFMIQTYIPCIMTVILSQVSFWINKESVPARTVFGITTVLTMTTLSISARHSLPKVSYATAMDWFIAVCFAFVFSALIEFAAVNYFTNIQMQKAKKKISKPPPEVPAAPVLKEKHTETSLQNTHANLNMRKRTNALVHSESDVKSRTEVGNHSSKTSAVQESSEATPKAHLASSPNPFSRANAAETMSAAARGLSSAASPSPHGTLRPASLGSASTRPAFGSRLGRIKTTVNTTGAAGNVSATPPPPAPPPSGSGTSKIDKYARILFPVTFGAFNMVYWVVYLSKDTMEKSESLM.

Positions 1–35 are cleaved as a signal peptide; the sequence is MVSVQKVPAIALCSGVSLALLHFLCLAACLNESPG. The Extracellular segment spans residues 36–259; the sequence is QNSKDEKLCP…FHLRRKMGYF (224 aa). The N-linked (GlcNAc...) asparagine glycan is linked to Asn47. Arg100 is a binding site for 4-aminobutanoate. Residues Asn144 and Asn157 are each glycosylated (N-linked (GlcNAc...) asparagine). Thr163 is a 4-aminobutanoate binding site. Cysteines 172 and 186 form a disulfide. A helical membrane pass occupies residues 260–280; that stretch reads MIQTYIPCIMTVILSQVSFWI. Over 281 to 284 the chain is Cytoplasmic; it reads NKES. The helical transmembrane segment at 285–305 threads the bilayer; that stretch reads VPARTVFGITTVLTMTTLSIS. The Extracellular portion of the chain corresponds to 306–318; it reads ARHSLPKVSYATA. The helical transmembrane segment at 319–341 threads the bilayer; that stretch reads MDWFIAVCFAFVFSALIEFAAVN. Topologically, residues 342–515 are cytoplasmic; the sequence is YFTNIQMQKA…PPPSGSGTSK (174 aa). Disordered regions lie at residues 353 to 480 and 492 to 513; these read KKIS…FGSR and GAAG…GSGT. The span at 396-406 shows a compositional bias: basic and acidic residues; that stretch reads SESDVKSRTEV. Positions 407-422 are enriched in polar residues; the sequence is GNHSSKTSAVQESSEA. The span at 445–458 shows a compositional bias: low complexity; it reads SAAARGLSSAASPS. Pro residues predominate over residues 500–509; sequence TPPPPAPPPS. A helical membrane pass occupies residues 516-538; the sequence is IDKYARILFPVTFGAFNMVYWVV. Over 539-552 the chain is Extracellular; sequence YLSKDTMEKSESLM.

It belongs to the ligand-gated ion channel (TC 1.A.9) family. Gamma-aminobutyric acid receptor (TC 1.A.9.5) subfamily. GABRA4 sub-subfamily. In terms of assembly, heteropentamer, formed by a combination of alpha (GABRA1-6), beta (GABRB1-3), gamma (GABRG1-3), delta (GABRD), epsilon (GABRE), rho (GABRR1-3), pi (GABRP) and theta (GABRQ) chains, each subunit exhibiting distinct physiological and pharmacological properties. In terms of tissue distribution, expressed in the brain.

Its subcellular location is the cell membrane. The protein resides in the postsynaptic cell membrane. The enzyme catalyses chloride(in) = chloride(out). Its activity is regulated as follows. Potentiated by gaboxadol. Potentiated by histamine. In terms of biological role, alpha subunit of the heteropentameric ligand-gated chloride channel gated by gamma-aminobutyric acid (GABA), a major inhibitory neurotransmitter in the brain. GABA-gated chloride channels, also named GABA(A) receptors (GABAAR), consist of five subunits arranged around a central pore and contain GABA active binding site(s) located at the alpha and beta subunit interface(s). Alpha-4/GABRA4 subunit often assembles with delta or gamma-2 subunits, in combination with beta subunits. When activated by GABA, GABAARs selectively allow the flow of chloride anions across the cell membrane down their electrochemical gradient. GABAARs containing alpha-4 are predominantly extrasynaptic, contributing to tonic inhibition in dentate granule cells and thalamic relay neurons. Extrasynaptic alpha-4-containing GABAARs control levels of excitability and network activity. GABAAR containing alpha-4-beta-3-delta subunits can simultaneously bind GABA and histamine where histamine binds at the interface of two neighboring beta subunits, which may be involved in the regulation of sleep and wakefulness. In Mus musculus (Mouse), this protein is Gamma-aminobutyric acid receptor subunit alpha-4.